A 634-amino-acid chain; its full sequence is Growth hormone receptor (634 aa).

Positions 1-18 (MDLWQLLLTLAVAGSSDA) are cleaved as a signal peptide. The Extracellular segment spans residues 19–260 (FSGSEATPAF…NPSACEEDFQ (242 aa)). N-linked (GlcNAc...) asparagine glycosylation occurs at asparagine 46. Cysteines 56 and 66 form a disulfide. Residue asparagine 73 is glycosylated (N-linked (GlcNAc...) asparagine). Residues cysteine 97 and cysteine 108 are joined by a disulfide bond. N-linked (GlcNAc...) asparagine glycosylation occurs at asparagine 111. Cysteine 122 and cysteine 136 are disulfide-bonded. In terms of domain architecture, Fibronectin type-III spans 147-250 (PPVGLNWTLL…EVLLITFPQM (104 aa)). Asparagine 152, asparagine 157, and asparagine 196 each carry an N-linked (GlcNAc...) asparagine glycan. The short motif at 236–240 (YGKFS) is the WSXWS motif element. Residues 261–284 (FPWFLIIIFGILGLAVTLYLLIFS) form a helical membrane-spanning segment. Topologically, residues 285–634 (KQQRIKMLIL…STDQLNKIMP (350 aa)) are cytoplasmic. Positions 290-375 (KMLILPPVPV…HEKSLNIFGA (86 aa)) are required for JAK2 binding. A Box 1 motif motif is present at residues 293–301 (ILPPVPVPK). The UbE motif motif lies at 336 to 345 (DSWVEFIELD). A Phosphoserine modification is found at serine 337.

Belongs to the type I cytokine receptor family. Type 1 subfamily. As to quaternary structure, on growth hormone (GH) binding, forms homodimers and binds JAK2 via a box 1-containing domain. The soluble form (GHBP) is produced by phorbol ester-promoted proteolytic cleavage at the cell surface (shedding) by ADAM17/TACE. Shedding is inhibited by growth hormone (GH) binding to the receptor probably due to a conformational change in GHR rendering the receptor inaccessible to ADAM17. Post-translationally, on GH binding, phosphorylated on tyrosine residues in the cytoplasmic domain by JAK2. In terms of processing, ubiquitinated by the ECS(SOCS2) complex following ligand-binding and phosphorylation by JAK2, leading to its degradation by the proteasome. Regulation by the ECS(SOCS2) complex acts as a negative feedback loop of growth hormone receptor signaling. Ubiquitination is not sufficient for GHR internalization.

It is found in the cell membrane. The protein localises to the secreted. Functionally, receptor for pituitary gland growth hormone (GH1) involved in regulating postnatal body growth. On ligand binding, couples to the JAK2/STAT5 pathway. The soluble form (GHBP) acts as a reservoir of growth hormone in plasma and may be a modulator/inhibitor of GH signaling. In Bos taurus (Bovine), this protein is Growth hormone receptor (GHR).